Reading from the N-terminus, the 50-residue chain is Sperm protamine P1 (50 aa).

The protein belongs to the protamine P1 family. As to expression, testis.

It localises to the nucleus. The protein resides in the chromosome. Its function is as follows. Protamines substitute for histones in the chromatin of sperm during the haploid phase of spermatogenesis. They compact sperm DNA into a highly condensed, stable and inactive complex. This chain is Sperm protamine P1 (PRM1), found in Chilonatalus micropus (Cuban funnel-eared bat).